Here is a 171-residue protein sequence, read N- to C-terminus: Putative metal-dependent hydrolase BH0277 (171 aa).

Positions 64, 155, and 159 each coordinate Zn(2+).

It belongs to the metal hydrolase YfiT family. As to quaternary structure, homodimer. Zn(2+) serves as cofactor.

The protein resides in the cytoplasm. In terms of biological role, possible metal-dependent hydrolase. This is Putative metal-dependent hydrolase BH0277 from Halalkalibacterium halodurans (strain ATCC BAA-125 / DSM 18197 / FERM 7344 / JCM 9153 / C-125) (Bacillus halodurans).